A 233-amino-acid chain; its full sequence is Superoxide dismutase [Mn], mitochondrial (233 aa).

A mitochondrion-targeting transit peptide spans 1 to 27; it reads MALRSLVTRKNLPSAFKAATGLGQLRG. Positions 55, 103, 192, and 196 each coordinate Mn(2+).

Belongs to the iron/manganese superoxide dismutase family. In terms of assembly, homotetramer. It depends on Mn(2+) as a cofactor. As to expression, present in all tissues examined (leaf, petiole, root, latex, callus) with young leaves showing the highest levels in intact plants.

It localises to the mitochondrion matrix. The catalysed reaction is 2 superoxide + 2 H(+) = H2O2 + O2. Functionally, destroys superoxide anion radicals which are normally produced within the cells and which are toxic to biological systems. This is Superoxide dismutase [Mn], mitochondrial (SODA) from Hevea brasiliensis (Para rubber tree).